Here is a 545-residue protein sequence, read N- to C-terminus: Adenine deaminase (545 aa).

Belongs to the metallo-dependent hydrolases superfamily. Adenine deaminase family. Mn(2+) is required as a cofactor.

It catalyses the reaction adenine + H2O + H(+) = hypoxanthine + NH4(+). This chain is Adenine deaminase, found in Salinibacter ruber (strain DSM 13855 / M31).